A 149-amino-acid chain; its full sequence is Ribosome-binding factor A (149 aa).

The disordered stretch occupies residues 124-149 (AKLREGAVPAGDADPYKTSSKSESEE).

It belongs to the RbfA family. As to quaternary structure, monomer. Binds 30S ribosomal subunits, but not 50S ribosomal subunits or 70S ribosomes.

Its subcellular location is the cytoplasm. Functionally, one of several proteins that assist in the late maturation steps of the functional core of the 30S ribosomal subunit. Associates with free 30S ribosomal subunits (but not with 30S subunits that are part of 70S ribosomes or polysomes). Required for efficient processing of 16S rRNA. May interact with the 5'-terminal helix region of 16S rRNA. The sequence is that of Ribosome-binding factor A from Corynebacterium glutamicum (strain R).